We begin with the raw amino-acid sequence, 120 residues long: Putative ferric transport system permease-like protein AfuB (120 aa).

The Cytoplasmic portion of the chain corresponds to 1–38; sequence MESLPGQIDKSLDEASLSLRAGSLRTITHILLPLLRPA. Residues 1–102 form the ABC transmembrane type-1 domain; it reads MESLPGQIDK…VVMLAIIFIF (102 aa). Residues 39–59 traverse the membrane as a helical segment; that stretch reads ILSALIYSFVRAITTVSAIVF. Residues 60–81 are Periplasmic-facing; the sequence is LVTPDTRVATAYILNRVEDGEY. A helical transmembrane segment spans residues 82–102; it reads GVAIAYGSILIVVMLAIIFIF. The Cytoplasmic portion of the chain corresponds to 103-120; that stretch reads DWLIGESRTSRSKAKNQA.

This sequence belongs to the binding-protein-dependent transport system permease family. FbpB subfamily.

The protein resides in the cell inner membrane. A severely truncated paralog of the AfuB uptake protein, homologous only to the last 20% of the intact protein in Actinobacillus. This chain is Putative ferric transport system permease-like protein AfuB (afuB), found in Escherichia coli (strain K12).